The sequence spans 274 residues: Rhamnulose-1-phosphate aldolase (274 aa).

Residue glutamate 117 is part of the active site. Histidine 141, histidine 143, and histidine 212 together coordinate Zn(2+).

This sequence belongs to the aldolase class II family. RhaD subfamily. Homotetramer. Zn(2+) is required as a cofactor.

Its subcellular location is the cytoplasm. The enzyme catalyses L-rhamnulose 1-phosphate = (S)-lactaldehyde + dihydroxyacetone phosphate. It functions in the pathway carbohydrate degradation; L-rhamnose degradation; glycerone phosphate from L-rhamnose: step 3/3. Catalyzes the reversible cleavage of L-rhamnulose-1-phosphate to dihydroxyacetone phosphate (DHAP) and L-lactaldehyde. The sequence is that of Rhamnulose-1-phosphate aldolase from Yersinia pseudotuberculosis serotype I (strain IP32953).